The chain runs to 189 residues: UPF0340 protein EF_1967 (189 aa).

This sequence belongs to the UPF0340 family.

The protein is UPF0340 protein EF_1967 of Enterococcus faecalis (strain ATCC 700802 / V583).